The chain runs to 357 residues: Protein RecA (357 aa).

73–80 serves as a coordination point for ATP; that stretch reads GPESSGKT.

It belongs to the RecA family.

The protein localises to the cytoplasm. Can catalyze the hydrolysis of ATP in the presence of single-stranded DNA, the ATP-dependent uptake of single-stranded DNA by duplex DNA, and the ATP-dependent hybridization of homologous single-stranded DNAs. It interacts with LexA causing its activation and leading to its autocatalytic cleavage. This is Protein RecA from Nitratidesulfovibrio vulgaris (strain ATCC 29579 / DSM 644 / CCUG 34227 / NCIMB 8303 / VKM B-1760 / Hildenborough) (Desulfovibrio vulgaris).